The sequence spans 538 residues: MLIPEPILAHFPWLSLSIFFPIVGALIVPFIPDKGEGKEVRWYALIIALITFLITVAAYFKGFDPSQEGLQLYEKVSWLPDLGLTWSVGADGLSMPLILLTSFITSLAVLAAWPVSYKPKLFFFLILAMDGGQIAVFAVQDMLLFFLAWELELFPVYLFLAIWGGKKRQYAATKFIIYTAGSSLFILLAGLAMGFFQGGGMPDFGYTHLAQQNFGKGFQLLCYSGLLIAFGVKLPIVPLHTWLPDAHGEATAPVHMLLAGILLKMGGYALLRFNAQLLPDAHAQFAPLLIVLGVVNIIYAALTSFAQRNLKRKIAYSSISHMGFVLIGIGSFSSLGTSGAMLQMVSHGLIGASLFFLVGATYDRTHTLQLDEMGGIGQNMRIMFALWTACAFASLALPGMSGFISELMVFVGFVTDEVYTLPFRIVVASLAAIGVILTPIYLLSMLREIFFGKENAKLISKAKLVDAEPREIYIIACLLVPIIGIGLYPKIMTDTYISSIDGLVKRDLLAVERIRSDQTTIISNSNLSIGTIEAPLLD.

The next 14 helical transmembrane spans lie at 11–31 (FPWLSLSIFFPIVGALIVPFI), 43–63 (YALIIALITFLITVAAYFKGF), 95–115 (MPLILLTSFITSLAVLAAWPV), 119–139 (PKLFFFLILAMDGGQIAVFAV), 143–163 (LLFFLAWELELFPVYLFLAIW), 175–195 (FIIYTAGSSLFILLAGLAMGF), 217–237 (GFQLLCYSGLLIAFGVKLPIV), 251–271 (TAPVHMLLAGILLKMGGYALL), 285–305 (FAPLLIVLGVVNIIYAALTSF), 314–334 (IAYSSISHMGFVLIGIGSFSS), 340–360 (AMLQMVSHGLIGASLFFLVGA), 382–404 (IMFALWTACAFASLALPGMSGFI), 425–445 (IVVASLAAIGVILTPIYLLSM), and 472–492 (IYIIACLLVPIIGIGLYPKIM).

It belongs to the complex I subunit 4 family.

It localises to the cellular thylakoid membrane. It catalyses the reaction a plastoquinone + NADH + (n+1) H(+)(in) = a plastoquinol + NAD(+) + n H(+)(out). The catalysed reaction is a plastoquinone + NADPH + (n+1) H(+)(in) = a plastoquinol + NADP(+) + n H(+)(out). NDH-1 shuttles electrons from NAD(P)H, via FMN and iron-sulfur (Fe-S) centers, to quinones in the respiratory chain. The immediate electron acceptor for the enzyme in this species is believed to be plastoquinone. Couples the redox reaction to proton translocation (for every two electrons transferred, four hydrogen ions are translocated across the cytoplasmic membrane), and thus conserves the redox energy in a proton gradient. The polypeptide is NAD(P)H-quinone oxidoreductase chain 4 (Prochlorococcus marinus (strain NATL2A)).